The primary structure comprises 57 residues: MNYILNKNKKVSLTELMNQQPHWYLEELQEHLIKYLDTNGLNDTKKLIKQTIKEWKK.

This is an uncharacterized protein from Ureaplasma parvum serovar 3 (strain ATCC 700970).